Consider the following 473-residue polypeptide: Ribulose bisphosphate carboxylase large chain (473 aa).

A propeptide spanning residues Met1 to Ser2 is cleaved from the precursor. The substrate site is built by Asn123 and Thr173. Residue Lys175 is the Proton acceptor of the active site. Lys177 provides a ligand contact to substrate. Mg(2+)-binding residues include Lys201, Asp203, and Glu204. The residue at position 201 (Lys201) is an N6-carboxylysine. Ser208 is subject to Phosphoserine. His294 serves as the catalytic Proton acceptor. Residues Arg295 and His327 each contribute to the substrate site. Position 330 is a phosphothreonine (Thr330). Ser379 is a binding site for substrate.

This sequence belongs to the RuBisCO large chain family. Type I subfamily. As to quaternary structure, heterohexadecamer of 8 large chains and 8 small chains; disulfide-linked. The disulfide link is formed within the large subunit homodimers. Requires Mg(2+) as cofactor. The disulfide bond which can form in the large chain dimeric partners within the hexadecamer appears to be associated with oxidative stress and protein turnover.

Its subcellular location is the plastid. The protein localises to the chloroplast. The enzyme catalyses 2 (2R)-3-phosphoglycerate + 2 H(+) = D-ribulose 1,5-bisphosphate + CO2 + H2O. It carries out the reaction D-ribulose 1,5-bisphosphate + O2 = 2-phosphoglycolate + (2R)-3-phosphoglycerate + 2 H(+). Its function is as follows. RuBisCO catalyzes two reactions: the carboxylation of D-ribulose 1,5-bisphosphate, the primary event in carbon dioxide fixation, as well as the oxidative fragmentation of the pentose substrate in the photorespiration process. Both reactions occur simultaneously and in competition at the same active site. The polypeptide is Ribulose bisphosphate carboxylase large chain (Sinapis alba (White mustard)).